The chain runs to 114 residues: Cyclin-dependent kinase 2-associated protein 1 (114 aa).

The disordered stretch occupies residues 18 to 57 (AGSVHSPSTSMATSSQYRQLLSDYGPPSLGYTQGTGNSQV). The segment at 19-24 (GSVHSP) is interaction with CDK2AP2. The segment covering 20–36 (SVHSPSTSMATSSQYRQ) has biased composition (polar residues). Position 45 is a phosphoserine; by IKKE (Ser-45). The segment covering 47–57 (GYTQGTGNSQV) has biased composition (polar residues).

The protein belongs to the CDK2AP family. Homodimer. Component of the nucleosome remodeling and deacetylase (NuRD) repressor complex, composed of core proteins MTA1, MTA2, MTA3, RBBP4, RBBP7, HDAC1, HDAC2, MBD2, MBD3, and peripherally associated proteins CDK2AP1, CDK2AP2, GATAD2A, GATAD2B, CHD3, CHD4 and CHD5. The exact stoichiometry of the NuRD complex is unknown, and some subunits such as MBD2 and MBD3, GATAD2A and GATAD2B, and CHD3, CHD4 and CHD5 define mutually exclusive NuRD complexes. Interacts with monomeric unphosphorylated CDK2. Interacts with CDK2AP2. Interacts with GATAD2A. Interacts with HDAC1. Interacts with HDAC2. Interacts with MBD2. Interacts with MBD3. Interacts with RBBP4. Interacts with RBBP7. Post-translationally, phosphorylated in vitro by IKBKE at Ser-45.

Its subcellular location is the nucleus. The protein resides in the chromosome. In terms of biological role, inhibitor of cyclin-dependent kinase CDK2. Also acts as a component of the histone deacetylase NuRD complex which participates in the remodeling of chromatin. The polypeptide is Cyclin-dependent kinase 2-associated protein 1 (Cdk2ap1) (Mus musculus (Mouse)).